Reading from the N-terminus, the 877-residue chain is DNA polymerase I (877 aa).

The region spanning 1–310 (MKKKLVLIDG…FTLADRVTEE (310 aa)) is the 5'-3' exonuclease domain. Residues 311–465 (MLADKAALVV…ALERPFLDEL (155 aa)) enclose the 3'-5' exonuclease domain. The interval 469 to 877 (EQDRLLVELE…HYGSTWYDAK (409 aa)) is polymerase.

The protein belongs to the DNA polymerase type-A family. In terms of assembly, single-chain monomer with multiple functions.

It catalyses the reaction DNA(n) + a 2'-deoxyribonucleoside 5'-triphosphate = DNA(n+1) + diphosphate. Functionally, in addition to polymerase activity, this DNA polymerase exhibits 3'-5' and 5'-3' exonuclease activity. This is DNA polymerase I (polA) from Bacillus caldotenax.